Here is a 339-residue protein sequence, read N- to C-terminus: Tetraacyldisaccharide 4'-kinase (339 aa).

58-65 is a binding site for ATP; sequence TVGGSGKT.

Belongs to the LpxK family.

The catalysed reaction is a lipid A disaccharide + ATP = a lipid IVA + ADP + H(+). It participates in glycolipid biosynthesis; lipid IV(A) biosynthesis; lipid IV(A) from (3R)-3-hydroxytetradecanoyl-[acyl-carrier-protein] and UDP-N-acetyl-alpha-D-glucosamine: step 6/6. Functionally, transfers the gamma-phosphate of ATP to the 4'-position of a tetraacyldisaccharide 1-phosphate intermediate (termed DS-1-P) to form tetraacyldisaccharide 1,4'-bis-phosphate (lipid IVA). This Shewanella baltica (strain OS155 / ATCC BAA-1091) protein is Tetraacyldisaccharide 4'-kinase.